The chain runs to 429 residues: Adenylosuccinate synthetase (429 aa).

GTP-binding positions include 12 to 18 (GDEGKGK) and 40 to 42 (GHT). Asp13 acts as the Proton acceptor in catalysis. Asp13 and Gly40 together coordinate Mg(2+). Residues 13 to 16 (DEGK), 38 to 41 (NAGH), Thr129, Arg143, Gln223, Thr238, and Arg302 each bind IMP. The Proton donor role is filled by His41. 298-304 (TVTGRAR) is a substrate binding site. GTP-binding positions include Arg304, 330-332 (KLD), and 412-414 (STS).

Belongs to the adenylosuccinate synthetase family. Homodimer. The cofactor is Mg(2+).

It is found in the cytoplasm. The catalysed reaction is IMP + L-aspartate + GTP = N(6)-(1,2-dicarboxyethyl)-AMP + GDP + phosphate + 2 H(+). It participates in purine metabolism; AMP biosynthesis via de novo pathway; AMP from IMP: step 1/2. In terms of biological role, plays an important role in the de novo pathway of purine nucleotide biosynthesis. Catalyzes the first committed step in the biosynthesis of AMP from IMP. The polypeptide is Adenylosuccinate synthetase (Acidiphilium cryptum (strain JF-5)).